The sequence spans 258 residues: Small ribosomal subunit protein uS2 (258 aa).

The interval 234–258 is disordered; it reads ETANAEEAMQKAAAVEAAAEAAPAQ. Residues 236–258 are compositionally biased toward low complexity; the sequence is ANAEEAMQKAAAVEAAAEAAPAQ.

This sequence belongs to the universal ribosomal protein uS2 family.

In Desulfovibrio desulfuricans (strain ATCC 27774 / DSM 6949 / MB), this protein is Small ribosomal subunit protein uS2.